We begin with the raw amino-acid sequence, 52 residues long: MGSRKTALVKTRLMRALKRNREIPAWKRMMKEHKGEYNRARRHWRSKKLKIY.

Belongs to the eukaryotic ribosomal protein eL39 family. Interacts with YIH1.

In Encephalitozoon cuniculi (strain GB-M1) (Microsporidian parasite), this protein is Large ribosomal subunit protein eL39 (RPL39).